A 187-amino-acid polypeptide reads, in one-letter code: MSQSGEENLQGSWVELHFSNGNGSSVPASVSIYNGDMEKILLDAQHESGRSSSKSSHCDSPPRSQTPQDTNRAEIDSHSFGEKNSTLSEEDYIERRREVESILKKNSDWIWDWSSRPENIPPKEFLFKHPKRTATLSMRNTSVMKKGGIFSADFLKVFLPSLLLSHLLAIGLGIYIGRRLTTSTSTF.

Residues 42–86 (LDAQHESGRSSSKSSHCDSPPRSQTPQDTNRAEIDSHSFGEKNST) are disordered. 6 positions are modified to phosphoserine: serine 48, serine 60, serine 77, serine 79, serine 85, and serine 88. Residues 50–63 (RSSSKSSHCDSPPR) show a composition bias toward low complexity. Residues 71 to 81 (NRAEIDSHSFG) are compositionally biased toward basic and acidic residues. A BH3 motif is present at residues 93 to 118 (IERRREVESILKKNSDWIWDWSSRPE). Residues 157 to 177 (VFLPSLLLSHLLAIGLGIYIG) traverse the membrane as a helical segment.

It belongs to the NIP3 family. Homodimer. Binds to BCL2. Interacts with BNIP3L and ACAA2. Interacts (via BH3 domain) with SPATA18 (via coiled-coil domains). Interacts with BOK; promotes BOK oligomerization. Interacts with PPTC7; this interaction promotes BNIP3 degradation.

The protein localises to the mitochondrion. Its subcellular location is the mitochondrion outer membrane. Apoptosis-inducing protein that can overcome BCL2 suppression. May play a role in repartitioning calcium between the two major intracellular calcium stores in association with BCL2. Involved in mitochondrial quality control via its interaction with SPATA18/MIEAP: in response to mitochondrial damage, participates in mitochondrial protein catabolic process (also named MALM) leading to the degradation of damaged proteins inside mitochondria. The physical interaction of SPATA18/MIEAP, BNIP3 and BNIP3L/NIX at the mitochondrial outer membrane may play a critical role in the translocation of lysosomal proteins from the cytoplasm to the mitochondrial matrix. The physical interaction of SPATA18/MIEAP, BNIP3 and BNIP3L/NIX at the mitochondrial outer membrane regulates the opening of a pore in the mitochondrial double membrane in order to mediate the translocation of lysosomal proteins from the cytoplasm to the mitochondrial matrix. Plays an important role in the calprotectin (S100A8/A9)-induced cell death pathway. This Mus musculus (Mouse) protein is BCL2/adenovirus E1B 19 kDa protein-interacting protein 3.